A 270-amino-acid polypeptide reads, in one-letter code: uncharacterized protein (270 aa).

The signal sequence occupies residues 1-23 (MKKLLIILAATLVLVLGSSGNFR).

This is an uncharacterized protein from Archaeoglobus fulgidus (strain ATCC 49558 / DSM 4304 / JCM 9628 / NBRC 100126 / VC-16).